Here is a 171-residue protein sequence, read N- to C-terminus: MDKKSLYKYLLLRSTGDMHKAKSPTIMTRVTNNVYLGNYKNAMDAPSSEVKFKYVLNLTMDKYTLPNSNINIIHIPLVDDTTTDISKYFDDVTAFLSKCDQRNEPVLVHCAAGVNRSGAMILAYLMSKNKESSPMLYFLYVYHSMRDLRGAFVENPSFKRQIIEKYVIDKN.

One can recognise a Tyrosine-protein phosphatase domain in the interval 23–171; it reads SPTIMTRVTN…IIEKYVIDKN (149 aa). Cys110 acts as the Phosphocysteine intermediate in catalysis.

Belongs to the protein-tyrosine phosphatase family. Non-receptor class dual specificity subfamily. In terms of assembly, homodimer.

The protein resides in the virion. The protein localises to the host cytoplasm. The catalysed reaction is O-phospho-L-tyrosyl-[protein] + H2O = L-tyrosyl-[protein] + phosphate. It catalyses the reaction O-phospho-L-seryl-[protein] + H2O = L-seryl-[protein] + phosphate. Serine/tyrosine phosphatase which down-regulates cellular antiviral response by dephosphorylating activated host STAT1 and blocking interferon (IFN)-stimulated innate immune responses. Dephosphorylates the OPG144 protein. The chain is Dual specificity protein phosphatase OPG106 (OPG106) from Homo sapiens (Human).